Here is a 338-residue protein sequence, read N- to C-terminus: Holliday junction branch migration complex subunit RuvB (338 aa).

A large ATPase domain (RuvB-L) region spans residues 4 to 184; it reads SDRLVSGKAR…FGISHHLQYY (181 aa). ATP-binding positions include Arg24, Gly65, Lys68, Thr69, Thr70, 131-133, Arg174, Tyr184, and Arg221; that span reads EDY. Thr69 is a binding site for Mg(2+). Residues 185–255 form a small ATPAse domain (RuvB-S) region; sequence HHDELTQIVM…LADEALELLA (71 aa). Residues 258 to 338 are head domain (RuvB-H); it reads HLGFDALDRR…NIEVPDGRNS (81 aa). Positions 294, 313, and 318 each coordinate DNA.

Belongs to the RuvB family. As to quaternary structure, homohexamer. Forms an RuvA(8)-RuvB(12)-Holliday junction (HJ) complex. HJ DNA is sandwiched between 2 RuvA tetramers; dsDNA enters through RuvA and exits via RuvB. An RuvB hexamer assembles on each DNA strand where it exits the tetramer. Each RuvB hexamer is contacted by two RuvA subunits (via domain III) on 2 adjacent RuvB subunits; this complex drives branch migration. In the full resolvosome a probable DNA-RuvA(4)-RuvB(12)-RuvC(2) complex forms which resolves the HJ.

Its subcellular location is the cytoplasm. The catalysed reaction is ATP + H2O = ADP + phosphate + H(+). Its function is as follows. The RuvA-RuvB-RuvC complex processes Holliday junction (HJ) DNA during genetic recombination and DNA repair, while the RuvA-RuvB complex plays an important role in the rescue of blocked DNA replication forks via replication fork reversal (RFR). RuvA specifically binds to HJ cruciform DNA, conferring on it an open structure. The RuvB hexamer acts as an ATP-dependent pump, pulling dsDNA into and through the RuvAB complex. RuvB forms 2 homohexamers on either side of HJ DNA bound by 1 or 2 RuvA tetramers; 4 subunits per hexamer contact DNA at a time. Coordinated motions by a converter formed by DNA-disengaged RuvB subunits stimulates ATP hydrolysis and nucleotide exchange. Immobilization of the converter enables RuvB to convert the ATP-contained energy into a lever motion, pulling 2 nucleotides of DNA out of the RuvA tetramer per ATP hydrolyzed, thus driving DNA branch migration. The RuvB motors rotate together with the DNA substrate, which together with the progressing nucleotide cycle form the mechanistic basis for DNA recombination by continuous HJ branch migration. Branch migration allows RuvC to scan DNA until it finds its consensus sequence, where it cleaves and resolves cruciform DNA. This Dichelobacter nodosus (strain VCS1703A) protein is Holliday junction branch migration complex subunit RuvB.